Consider the following 36-residue polypeptide: Conotoxin Cl14.10 (36 aa).

A propeptide spanning residues 1-2 (NE) is cleaved from the precursor.

In terms of processing, contains 2 disulfide bond. In terms of tissue distribution, expressed by the venom duct.

The protein localises to the secreted. This Californiconus californicus (California cone) protein is Conotoxin Cl14.10.